The sequence spans 380 residues: Cytochrome b (380 aa).

4 helical membrane-spanning segments follow: residues 33–53 (FGSL…FLAM), 77–98 (WLIR…FIHV), 113–133 (WNIG…GYVL), and 178–198 (FFAF…VHLL). Heme b-binding residues include histidine 83 and histidine 97. Heme b-binding residues include histidine 182 and histidine 196. Histidine 201 contacts a ubiquinone. A run of 4 helical transmembrane segments spans residues 226–246 (IKDL…VLFF), 288–308 (LGGV…PLLN), 320–340 (ITQA…WIGG), and 347–367 (FTLI…IFMP).

This sequence belongs to the cytochrome b family. In terms of assembly, the cytochrome bc1 complex contains 11 subunits: 3 respiratory subunits (MT-CYB, CYC1 and UQCRFS1), 2 core proteins (UQCRC1 and UQCRC2) and 6 low-molecular weight proteins (UQCRH/QCR6, UQCRB/QCR7, UQCRQ/QCR8, UQCR10/QCR9, UQCR11/QCR10 and a cleavage product of UQCRFS1). This cytochrome bc1 complex then forms a dimer. Requires heme b as cofactor.

The protein localises to the mitochondrion inner membrane. Its function is as follows. Component of the ubiquinol-cytochrome c reductase complex (complex III or cytochrome b-c1 complex) that is part of the mitochondrial respiratory chain. The b-c1 complex mediates electron transfer from ubiquinol to cytochrome c. Contributes to the generation of a proton gradient across the mitochondrial membrane that is then used for ATP synthesis. The sequence is that of Cytochrome b (MT-CYB) from Rhipidomys wetzeli (Wetzel's climbing mouse).